The primary structure comprises 307 residues: ATP synthase gamma chain (307 aa).

Belongs to the ATPase gamma chain family. In terms of assembly, F-type ATPases have 2 components, CF(1) - the catalytic core - and CF(0) - the membrane proton channel. CF(1) has five subunits: alpha(3), beta(3), gamma(1), delta(1), epsilon(1). CF(0) has three main subunits: a, b and c.

The protein localises to the cell membrane. Its function is as follows. Produces ATP from ADP in the presence of a proton gradient across the membrane. The gamma chain is believed to be important in regulating ATPase activity and the flow of protons through the CF(0) complex. The polypeptide is ATP synthase gamma chain (Bifidobacterium longum (strain DJO10A)).